We begin with the raw amino-acid sequence, 142 residues long: Small ribosomal subunit protein uS12 (142 aa).

Belongs to the universal ribosomal protein uS12 family. In terms of assembly, part of the 30S ribosomal subunit.

Its function is as follows. With S4 and S5 plays an important role in translational accuracy. Located at the interface of the 30S and 50S subunits. This Methanothrix thermoacetophila (strain DSM 6194 / JCM 14653 / NBRC 101360 / PT) (Methanosaeta thermophila) protein is Small ribosomal subunit protein uS12.